A 206-amino-acid chain; its full sequence is Testis-expressed protein 38 (206 aa).

The helical transmembrane segment at 15–35 (VSLYFGILGLCSVITGGCIIF) threads the bilayer.

Its subcellular location is the membrane. The polypeptide is Testis-expressed protein 38 (TEX38) (Homo sapiens (Human)).